Consider the following 428-residue polypeptide: Histidinol dehydrogenase (428 aa).

The NAD(+) site is built by Y125, Q186, and N209. Substrate-binding residues include S232, Q254, and H257. The Zn(2+) site is built by Q254 and H257. Catalysis depends on proton acceptor residues E322 and H323. Residues H323, D356, E410, and H415 each contribute to the substrate site. Residue D356 coordinates Zn(2+). Zn(2+) is bound at residue H415.

Belongs to the histidinol dehydrogenase family. Zn(2+) is required as a cofactor.

It carries out the reaction L-histidinol + 2 NAD(+) + H2O = L-histidine + 2 NADH + 3 H(+). Its pathway is amino-acid biosynthesis; L-histidine biosynthesis; L-histidine from 5-phospho-alpha-D-ribose 1-diphosphate: step 9/9. Functionally, catalyzes the sequential NAD-dependent oxidations of L-histidinol to L-histidinaldehyde and then to L-histidine. This Lactiplantibacillus plantarum (strain ATCC BAA-793 / NCIMB 8826 / WCFS1) (Lactobacillus plantarum) protein is Histidinol dehydrogenase.